Here is a 153-residue protein sequence, read N- to C-terminus: Endoribonuclease YbeY (153 aa).

H113, H117, and H123 together coordinate Zn(2+).

This sequence belongs to the endoribonuclease YbeY family. The cofactor is Zn(2+).

The protein localises to the cytoplasm. Its function is as follows. Single strand-specific metallo-endoribonuclease involved in late-stage 70S ribosome quality control and in maturation of the 3' terminus of the 16S rRNA. This chain is Endoribonuclease YbeY, found in Aliivibrio salmonicida (strain LFI1238) (Vibrio salmonicida (strain LFI1238)).